Consider the following 309-residue polypeptide: Zinc transporter ZIPB (309 aa).

At 1–22 (MNQPSSLAADLRGAWHAQAQSH) the chain is on the periplasmic side. Residues 23 to 50 (PLITLGLAASAAGVVLLLVAGIVNALTG) traverse the membrane as a helical segment. Topologically, residues 51–55 (ENRVH) are extracellular. A helical transmembrane segment spans residues 56-81 (VGYAVLGGAAGFAATALGALMALGLR). The Periplasmic portion of the chain corresponds to 82–83 (AI). A helical membrane pass occupies residues 84-119 (SARTQDAMLGFAAGMMLAASAFSLILPGLDAAGTIV). Asp-89 lines the Zn(2+) pocket. Residue Met-99 coordinates Cd(2+). Residues 120-121 (GP) are Extracellular-facing. A helical membrane pass occupies residues 122-145 (GPAAAAVVALGLGLGVLLMLGLDY). Asp-144 provides a ligand contact to Zn(2+). Asp-144 serves as a coordination point for Cd(2+). Residues 146–165 (FTPHEHERTGHQGPEAARVN) are Periplasmic-facing. The helical transmembrane segment at 166 to 190 (RVWLFVLTIILHNLPEGMAIGVSFA) threads the bilayer. His-177 is a Zn(2+) binding site. Residues His-177, Asn-178, and Glu-181 each coordinate Cd(2+). Glu-181 provides a ligand contact to Zn(2+). The Extracellular segment spans residues 191 to 192 (TG). A helical membrane pass occupies residues 193 to 222 (DLRIGLPLTSAIAIQDVPEGLAVALALRAV). Zn(2+) is bound at residue Gln-207. 3 residues coordinate Cd(2+): Gln-207, Asp-208, and Glu-211. Glu-211 contributes to the Zn(2+) binding site. Topologically, residues 223–224 (GL) are periplasmic. The chain crosses the membrane as a helical span at residues 225-251 (PIGRAVLVAVASGLMEPLGALVGVGIS). A Cd(2+)-binding site is contributed by Glu-240. Residues 252–255 (SGFA) lie on the Extracellular side of the membrane. A helical transmembrane segment spans residues 256–275 (LAYPISMGLAAGAMIFVVSH). Positions 275, 276, and 286 each coordinate Zn(2+). His-275 is a binding site for Cd(2+). The Periplasmic segment spans residues 276–287 (EVIPETHRNGHE). The helical transmembrane segment at 288–308 (TTATVGLMAGFALMMFLDTAL) threads the bilayer. Residue Gly-309 is a topological domain, extracellular.

The protein belongs to the ZIP transporter (TC 2.A.5) family. As to quaternary structure, homodimer. Also exists as a monomer.

It is found in the cell inner membrane. It catalyses the reaction Zn(2+)(in) = Zn(2+)(out). The catalysed reaction is Cd(2+)(in) = Cd(2+)(out). Functionally, selective electrodiffusional channel that mediates the uptake of Zn(2+). Exploits in vivo zinc concentration gradients (maintained by cellular zinc homeostasis) to passively move zinc ions into the cytoplasm. ZIPB-mediated zinc flux is dependent upon pH, but independent of the proton motive force. Is also able to import Cd(2+), but is not permeable to Co(2+), Cu(2+), Fe(2+), Mn(2+) and Ni(2+). In Bordetella bronchiseptica (strain ATCC BAA-588 / NCTC 13252 / RB50) (Alcaligenes bronchisepticus), this protein is Zinc transporter ZIPB.